The primary structure comprises 183 residues: Adenylate kinase (183 aa).

Residue glycine 12–threonine 17 coordinates ATP. The interval serine 32 to valine 61 is NMP. Residues threonine 33, arginine 38, glutamate 59 to valine 61, glycine 86 to arginine 89, and glutamine 93 contribute to the AMP site. Residues serine 127–aspartate 133 form an LID region. Arginine 128 contributes to the ATP binding site. Positions 130 and 141 each coordinate AMP. Glycine 169 is an ATP binding site.

This sequence belongs to the adenylate kinase family. In terms of assembly, monomer.

It is found in the cytoplasm. It catalyses the reaction AMP + ATP = 2 ADP. It functions in the pathway purine metabolism; AMP biosynthesis via salvage pathway; AMP from ADP: step 1/1. Catalyzes the reversible transfer of the terminal phosphate group between ATP and AMP. Plays an important role in cellular energy homeostasis and in adenine nucleotide metabolism. This chain is Adenylate kinase, found in Synechococcus sp. (strain CC9902).